The chain runs to 373 residues: Zinc finger CCCH domain-containing protein 15 homolog (373 aa).

Residues 1–27 are disordered; the sequence is MPPKQAQSKKTVEKEKKKKVEDKTFGL. The span at 10–25 shows a compositional bias: basic and acidic residues; sequence KTVEKEKKKKVEDKTF. 2 consecutive C3H1-type zinc fingers follow at residues 95–123 and 167–205; these read DPKS…HDLA and KPTA…HCLP. Positions 252-326 form a coiled coil; that stretch reads KEEKRLQKEK…ALANQINTSL (75 aa). The disordered stretch occupies residues 325 to 373; it reads SLFTDGGVLPSDDDDDDDDDDDDDEDGDDEEEDDDEEEGEYEEEEASDE. A compositionally biased stretch (acidic residues) spans 335-373; that stretch reads SDDDDDDDDDDDDDEDGDDEEEDDDEEEGEYEEEEASDE.

It belongs to the ZC3H15/TMA46 family.

This chain is Zinc finger CCCH domain-containing protein 15 homolog, found in Dictyostelium discoideum (Social amoeba).